The primary structure comprises 155 residues: 3-dehydroquinate dehydratase 1 (155 aa).

The active-site Proton acceptor is Y28. Residues N80, H86, and D93 each contribute to the substrate site. The active-site Proton donor is the H106. Substrate-binding positions include V107–T108 and R117.

The protein belongs to the type-II 3-dehydroquinase family. As to quaternary structure, homododecamer.

The enzyme catalyses 3-dehydroquinate = 3-dehydroshikimate + H2O. The protein operates within metabolic intermediate biosynthesis; chorismate biosynthesis; chorismate from D-erythrose 4-phosphate and phosphoenolpyruvate: step 3/7. Catalyzes a trans-dehydration via an enolate intermediate. The polypeptide is 3-dehydroquinate dehydratase 1 (aroQ1) (Bradyrhizobium diazoefficiens (strain JCM 10833 / BCRC 13528 / IAM 13628 / NBRC 14792 / USDA 110)).